A 144-amino-acid polypeptide reads, in one-letter code: Snake venom vascular endothelial growth factor toxin VR-1 (144 aa).

A signal peptide spans 1–24 (MAAYLLAVAILFCIQGWPSGTVQG). Q25 is modified (pyrrolidone carboxylic acid). Disulfide bonds link C38–C80, C69–C115, and C73–C117. The segment covering 120 to 134 (RWKQGEPEGPKEPRR) has biased composition (basic and acidic residues). A disordered region spans residues 120-144 (RWKQGEPEGPKEPRRGGVRAKFPFD). Residues 134–144 (RGGVRAKFPFD) constitute a propeptide that is removed on maturation.

This sequence belongs to the PDGF/VEGF growth factor family. Snake venom VEGF subfamily. In terms of assembly, homodimer; disulfide-linked. Interacts with VEGF receptor-2 (KDR) with high affinity, but not with VEGF receptor-1 (Flt-1), VEGF receptor-3 (FLT4), and neuropilin-1 (NRP1). Expressed by the venom gland.

The protein localises to the secreted. Its function is as follows. Snake venom VEGFs may contribute to venom dispersion and prey subjugation by inducing vascular permeability and hypotension. This protein induces angiogenesis probably through VEGF receptor (KDR/VEGFR-2) signaling, as well as drastic hypotension. The hypotension is mediated by nitric oxide, which is produced by VEGF-activated endothelium NO synthase. May also induce vascular permeability. The chain is Snake venom vascular endothelial growth factor toxin VR-1 from Daboia russelii (Russel's viper).